We begin with the raw amino-acid sequence, 201 residues long: Small ribosomal subunit protein uS4 (201 aa).

Positions 91-151 (SRLDNVVYRA…EKSRKMVWFD (61 aa)) constitute an S4 RNA-binding domain.

Belongs to the universal ribosomal protein uS4 family. Part of the 30S ribosomal subunit. Contacts protein S5. The interaction surface between S4 and S5 is involved in control of translational fidelity.

Functionally, one of the primary rRNA binding proteins, it binds directly to 16S rRNA where it nucleates assembly of the body of the 30S subunit. With S5 and S12 plays an important role in translational accuracy. The sequence is that of Small ribosomal subunit protein uS4 from Corynebacterium kroppenstedtii (strain DSM 44385 / JCM 11950 / CIP 105744 / CCUG 35717).